The sequence spans 359 residues: Stearoyl-CoA desaturase (359 aa).

The Cytoplasmic portion of the chain corresponds to 1 to 72 (MPAHLLQEEI…EGPKPKLEYV (72 aa)). A helical transmembrane segment spans residues 73–93 (WRNIILMSLLHLGALYGITLI). N75 contributes to the substrate binding site. Residues 94–97 (PTCK) lie on the Lumenal side of the membrane. The chain crosses the membrane as a helical span at residues 98-118 (IYTYIWVLFYYLMGALGITAG). Topologically, residues 119–217 (AHRLWSHRTY…EKLVMFQRRY (99 aa)) are cytoplasmic. The Fe cation site is built by H120 and H125. The short motif at 120–125 (HRLWSH) is the Histidine box-1 element. Residues N148, R155, and D156 each coordinate substrate. Fe cation is bound by residues H157, H160, and H161. The Histidine box-2 signature appears at 157–161 (HRAHH). The substrate site is built by R188 and K189. Phosphoserine occurs at positions 198 and 203. The helical transmembrane segment at 218-237 (YKPGVLLLCFILPTLVPWYL) threads the bilayer. The Lumenal segment spans residues 238-241 (WDET). A helical membrane pass occupies residues 242–263 (FQNSLFFATLFRYALGLNVTWL). W262 provides a ligand contact to substrate. The Cytoplasmic portion of the chain corresponds to 264 to 359 (VNSAAHMYGY…RTGEESYKSG (96 aa)). Residues H269, H298, H301, and H302 each coordinate Fe cation. The Histidine box-3 signature appears at 298-302 (HNYHH).

Belongs to the fatty acid desaturase type 1 family. The cofactor is Fe(2+).

Its subcellular location is the endoplasmic reticulum membrane. The catalysed reaction is octadecanoyl-CoA + 2 Fe(II)-[cytochrome b5] + O2 + 2 H(+) = (9Z)-octadecenoyl-CoA + 2 Fe(III)-[cytochrome b5] + 2 H2O. It catalyses the reaction hexadecanoyl-CoA + 2 Fe(II)-[cytochrome b5] + O2 + 2 H(+) = (9Z)-hexadecenoyl-CoA + 2 Fe(III)-[cytochrome b5] + 2 H2O. In terms of biological role, stearoyl-CoA desaturase that utilizes O(2) and electrons from reduced cytochrome b5 to introduce the first double bond into saturated fatty acyl-CoA substrates. Catalyzes the insertion of a cis double bond at the delta-9 position into fatty acyl-CoA substrates including palmitoyl-CoA and stearoyl-CoA. Gives rise to a mixture of 16:1 and 18:1 unsaturated fatty acids. Plays an important role in lipid biosynthesis. Plays an important role in regulating the expression of genes that are involved in lipogenesis and in regulating mitochondrial fatty acid oxidation. Plays an important role in body energy homeostasis. Contributes to the biosynthesis of membrane phospholipids, cholesterol esters and triglycerides. This Bos taurus (Bovine) protein is Stearoyl-CoA desaturase (SCD).